A 619-amino-acid chain; its full sequence is Enolase 4 (619 aa).

Positions Asp-173 to Glu-184 are enriched in basic and acidic residues. Residues Asp-173–His-236 form a disordered region. Pro residues predominate over residues Pro-188 to Pro-206. Glu-302 is a substrate binding site. The tract at residues Thr-333–Pro-354 is disordered. Catalysis depends on Lys-497, which acts as the Proton acceptor. Residue Lys-548 coordinates substrate.

It belongs to the enolase family. As to quaternary structure, interacts with ENO1. Isoform 1 and isoform 4 interact with AKAP4. In terms of processing, synthesized as an approximately 70-kDa precursor, which then undergoes proteolytic cleavage to an approximately 60-kDa enzyme; HOATZ associates directly or indirectly with ENO4 to mediate this process before its transport to mature flagella. Testis-specific. Expressed in spermatids and ependyma (at protein level). In terms of tissue distribution, expressed at higher levels in late spermatids than in pachytene spermatocytes. As to expression, expressed at higher levels in pachytene spermatocytes than in late spermatids.

The catalysed reaction is (2R)-2-phosphoglycerate = phosphoenolpyruvate + H2O. It functions in the pathway carbohydrate degradation; glycolysis; pyruvate from D-glyceraldehyde 3-phosphate: step 4/5. Functionally, required for sperm motility, function and male fertility. May be involved in the normal assembly of the sperm fibrous sheath and provides most of the enolase activity in sperm. The protein is Enolase 4 (Eno4) of Mus musculus (Mouse).